The sequence spans 545 residues: tRNA-2-methylthio-N(6)-dimethylallyladenosine synthase (545 aa).

The segment at 1-32 is disordered; it reads MSSASPLARCCDEATPSAGPRAAQPPYHGPVT. The MTTase N-terminal domain occupies 58–174; the sequence is RTYQVRTYGC…LPTLLERARH (117 aa). [4Fe-4S] cluster is bound by residues C67, C103, C137, C211, C215, and C218. Positions 197–433 constitute a Radical SAM core domain; sequence RESAYAAWVS…IALQEQISLE (237 aa). The region spanning 436–504 is the TRAM domain; the sequence is RALVGQAVEV…PHHLIADAGV (69 aa).

The protein belongs to the methylthiotransferase family. MiaB subfamily. Monomer. The cofactor is [4Fe-4S] cluster.

The protein resides in the cytoplasm. It catalyses the reaction N(6)-dimethylallyladenosine(37) in tRNA + (sulfur carrier)-SH + AH2 + 2 S-adenosyl-L-methionine = 2-methylsulfanyl-N(6)-dimethylallyladenosine(37) in tRNA + (sulfur carrier)-H + 5'-deoxyadenosine + L-methionine + A + S-adenosyl-L-homocysteine + 2 H(+). In terms of biological role, catalyzes the methylthiolation of N6-(dimethylallyl)adenosine (i(6)A), leading to the formation of 2-methylthio-N6-(dimethylallyl)adenosine (ms(2)i(6)A) at position 37 in tRNAs that read codons beginning with uridine. In Mycobacterium bovis (strain BCG / Pasteur 1173P2), this protein is tRNA-2-methylthio-N(6)-dimethylallyladenosine synthase.